The chain runs to 528 residues: GMP synthase [glutamine-hydrolyzing] (528 aa).

The 197-residue stretch at 3–199 (KVAIIDFGSQ…FLDIAGCQKD (197 aa)) folds into the Glutamine amidotransferase type-1 domain. The Nucleophile role is filled by C83. Active-site residues include H174 and E176. Residues 200-394 (WTVTSFIDDQ…LGISTEILMR (195 aa)) enclose the GMPS ATP-PPase domain. An ATP-binding site is contributed by 227 to 233 (SGGVDSS).

In terms of assembly, homodimer.

It carries out the reaction XMP + L-glutamine + ATP + H2O = GMP + L-glutamate + AMP + diphosphate + 2 H(+). It functions in the pathway purine metabolism; GMP biosynthesis; GMP from XMP (L-Gln route): step 1/1. In terms of biological role, catalyzes the synthesis of GMP from XMP. The polypeptide is GMP synthase [glutamine-hydrolyzing] (Ehrlichia ruminantium (strain Gardel)).